The sequence spans 336 residues: Biotin synthase (336 aa).

In terms of domain architecture, Radical SAM core spans 54–281 (NAIQLSTLLS…KAMVRLSAGR (228 aa)). Residues cysteine 69, cysteine 73, and cysteine 76 each contribute to the [4Fe-4S] cluster site. Positions 113, 144, 204, and 276 each coordinate [2Fe-2S] cluster.

This sequence belongs to the radical SAM superfamily. Biotin synthase family. In terms of assembly, homodimer. Requires [4Fe-4S] cluster as cofactor. [2Fe-2S] cluster serves as cofactor.

It carries out the reaction (4R,5S)-dethiobiotin + (sulfur carrier)-SH + 2 reduced [2Fe-2S]-[ferredoxin] + 2 S-adenosyl-L-methionine = (sulfur carrier)-H + biotin + 2 5'-deoxyadenosine + 2 L-methionine + 2 oxidized [2Fe-2S]-[ferredoxin]. Its pathway is cofactor biosynthesis; biotin biosynthesis; biotin from 7,8-diaminononanoate: step 2/2. In terms of biological role, catalyzes the conversion of dethiobiotin (DTB) to biotin by the insertion of a sulfur atom into dethiobiotin via a radical-based mechanism. The protein is Biotin synthase of Burkholderia pseudomallei (strain 1710b).